The following is a 230-amino-acid chain: MRLVIARCSVDYVGRLEAHLPSADRLLMVKADGSVSIHADDRAYKPLNWMTPPCSLVETPITDEDGEATGESLWVVENKKGEQLRITVEEIHSEQNFDLGQDPGLVKDGVEDHLQELLAEHITTLGDGYTLIRREYPTAIGPVDILCRNSDGETVAVEIKRRGGIDGVEQLTRYLELLNRDELLKPVHGVFAAQEIKPQAKTLAEDRGIKCVTLDYQALRGIESNELTLF.

Belongs to the NucS endonuclease family.

It localises to the cytoplasm. Its function is as follows. Cleaves both 3' and 5' ssDNA extremities of branched DNA structures. The protein is Endonuclease NucS of Corynebacterium glutamicum (strain ATCC 13032 / DSM 20300 / JCM 1318 / BCRC 11384 / CCUG 27702 / LMG 3730 / NBRC 12168 / NCIMB 10025 / NRRL B-2784 / 534).